A 102-amino-acid chain; its full sequence is Small ribosomal subunit protein eS24 (102 aa).

Belongs to the eukaryotic ribosomal protein eS24 family.

This is Small ribosomal subunit protein eS24 from Methanobrevibacter smithii (strain ATCC 35061 / DSM 861 / OCM 144 / PS).